The primary structure comprises 1064 residues: Lysine-specific demethylase 4A (1064 aa).

An N-acetylalanine modification is found at alanine 2. The JmjN domain maps to 14 to 56; that stretch reads IMTFYPTMEEFRNFSRYIAYIESQGAHRAGLAKVVPPKEWKPR. Tyrosine 132 provides a ligand contact to 2-oxoglutarate. Residues 142-308 form the JmjC domain; it reads EKHVDEWNIG…YGKQAVLCSC (167 aa). Fe cation is bound by residues histidine 188 and glutamate 190. 2-oxoglutarate-binding residues include asparagine 198 and lysine 206. Cysteine 234 and histidine 240 together coordinate Zn(2+). Residue lysine 241 coordinates 2-oxoglutarate. Histidine 276 serves as a coordination point for Fe cation. Positions 306 and 308 each coordinate Zn(2+). The tract at residues 358–384 is disordered; sequence ELPPRAGNEEECPEEDMEGVEDGEEGD. Acidic residues predominate over residues 366–382; the sequence is EEECPEEDMEGVEDGEE. Lysine 471 participates in a covalent cross-link: (Microbial infection) Glycyl lysine isopeptide (Lys-Gly) (interchain with G-Cter in SUMO). Disordered regions lie at residues 501 to 537 and 616 to 641; these read FSGSKKKSSSSLGSGSSRDSISSDSETSEPLSCRAQG and SDDETSEQLTPEEEAEETEAWAKPLS. A compositionally biased stretch (low complexity) spans 509-532; it reads SSSLGSGSSRDSISSDSETSEPLS. Serine 523 is modified (phosphoserine). An interaction with NCOR1 region spans residues 597–638; it reads RQPLSKLPRHHPLVLQECVSDDETSEQLTPEEEAEETEAWAK. Residues 616 to 634 are compositionally biased toward acidic residues; the sequence is SDDETSEQLTPEEEAEETE. The segment at 709-767 adopts a PHD-type 1 zinc-finger fold; the sequence is MCFTSTGCSTDINLSTPYLEEDGTSILVSCKKCSVRVHASCYGVPPAKASEDWMCSRCS. A C2HC pre-PHD-type zinc finger spans residues 772 to 805; it reads EEDCCLCSLRGGALQRANDDRWVHVSCAVAILEA. The PHD-type 2 zinc-finger motif lies at 828-885; the sequence is LKCIFCKKRRKRTAGCCVQCSHGRCPTAFHVSCAQAAGVMMQPDDWPFVVFITCFRHK. Tudor domains follow at residues 897 to 954 and 955 to 1011; these read QSIT…CLQF and GPPA…EELP.

It belongs to the JHDM3 histone demethylase family. As to quaternary structure, interacts with histone deacetylase proteins HDAC1, HDAC2 and HDAC3. Interacts with RB and NCOR1. Interacts with VRK1. Interacts with FBXO22; this interaction promotes KDM4A ubiquitination. (Microbial infection) Interacts with HTLV-1 Tax protein. The cofactor is Fe(2+). (Microbial infection) SUMOylated by human herpesvirus 8 E3 SUMO-protein ligase K-bZIP/K8 at Lys-471; thereby modulating the chromatin binding and histone demethylase activity of KDM4A. Post-translationally, ubiquitinated by RNF8 and RNF168 following DNA damage, leading to its degradation. Degradation promotes accessibility of H4K20me2 mark for DNA repair protein TP53BP1, which is then recruited. Also ubiquitinated by the SCF(FBXO22) complex; leading to proteasomal degradation. In terms of tissue distribution, ubiquitous.

Its subcellular location is the nucleus. The catalysed reaction is N(6),N(6),N(6)-trimethyl-L-lysyl(9)-[histone H3] + 2 2-oxoglutarate + 2 O2 = N(6)-methyl-L-lysyl(9)-[histone H3] + 2 formaldehyde + 2 succinate + 2 CO2. It carries out the reaction N(6),N(6),N(6)-trimethyl-L-lysyl(36)-[histone H3] + 2 2-oxoglutarate + 2 O2 = N(6)-methyl-L-lysyl(36)-[histone H3] + 2 formaldehyde + 2 succinate + 2 CO2. Several specific inhibitors are being developed and tested. Histone demethylase that specifically demethylates 'Lys-9' and 'Lys-36' residues of histone H3, thereby playing a central role in histone code. Does not demethylate histone H3 'Lys-4', H3 'Lys-27' nor H4 'Lys-20'. Demethylates trimethylated H3 'Lys-9' and H3 'Lys-36' residue, while it has no activity on mono- and dimethylated residues. Demethylation of Lys residue generates formaldehyde and succinate. Participates in transcriptional repression of ASCL2 and E2F-responsive promoters via the recruitment of histone deacetylases and NCOR1, respectively. In terms of biological role, crucial for muscle differentiation, promotes transcriptional activation of the Myog gene by directing the removal of repressive chromatin marks at its promoter. Lacks the N-terminal demethylase domain. This Homo sapiens (Human) protein is Lysine-specific demethylase 4A (KDM4A).